The sequence spans 132 residues: Small ribosomal subunit protein uS8 (132 aa).

Belongs to the universal ribosomal protein uS8 family. As to quaternary structure, part of the 30S ribosomal subunit. Contacts proteins S5 and S12.

In terms of biological role, one of the primary rRNA binding proteins, it binds directly to 16S rRNA central domain where it helps coordinate assembly of the platform of the 30S subunit. This Anaeromyxobacter dehalogenans (strain 2CP-1 / ATCC BAA-258) protein is Small ribosomal subunit protein uS8.